A 151-amino-acid chain; its full sequence is Macrodomain Ter protein (151 aa).

This sequence belongs to the MatP family. Homodimer.

It is found in the cytoplasm. In terms of biological role, required for spatial organization of the terminus region of the chromosome (Ter macrodomain) during the cell cycle. Prevents early segregation of duplicated Ter macrodomains during cell division. Binds specifically to matS, which is a 13 bp signature motif repeated within the Ter macrodomain. This chain is Macrodomain Ter protein, found in Photorhabdus laumondii subsp. laumondii (strain DSM 15139 / CIP 105565 / TT01) (Photorhabdus luminescens subsp. laumondii).